We begin with the raw amino-acid sequence, 885 residues long: Disease resistance protein RFL1 (885 aa).

Positions 27–61 (SYIQNLSENLASLQKAMGVLNAKRDDVQGRINREE) form a coiled coil. The NB-ARC domain occupies 141-443 (EAAPIAEVEE…CEGFIKEKQG (303 aa)). 183–190 (GMGGVGKT) is a binding site for ATP. 7 LRR repeats span residues 517–538 (AVKRMSLMNNNFEKILGSPECV), 539–561 (ELITLFLQNNYKLVDISMEFFRC), 564–586 (SLAVLDLSENHSLSELPEEISEL), 588–610 (SLQYLDLSGTYIERLPHGLHELR), 611–633 (KLVHLKLERTRRLESISGISYLS), 634–655 (SLRTLRLRDSKTTLDTGLMKEL), and 657–679 (LLEHLELITTDISSGLVGELFCY).

Belongs to the disease resistance NB-LRR family.

Its function is as follows. Disease resistance (R) protein. This is Disease resistance protein RFL1 (RFL1) from Arabidopsis thaliana (Mouse-ear cress).